A 754-amino-acid polypeptide reads, in one-letter code: 5-methyltetrahydropteroyltriglutamate--homocysteine methyltransferase (754 aa).

5-methyltetrahydropteroyltri-L-glutamate is bound by residues 15-18 and lysine 114; that span reads RELK. L-homocysteine-binding positions include 430-432 and glutamate 483; that span reads IGS. Residues 430–432 and glutamate 483 each bind L-methionine; that span reads IGS. Residues 514–515 and tryptophan 560 contribute to the 5-methyltetrahydropteroyltri-L-glutamate site; that span reads RC. Aspartate 598 is a binding site for L-homocysteine. Aspartate 598 lines the L-methionine pocket. Glutamate 604 is a 5-methyltetrahydropteroyltri-L-glutamate binding site. Residues histidine 641, cysteine 643, and glutamate 665 each coordinate Zn(2+). Histidine 694 (proton donor) is an active-site residue. Residue cysteine 726 coordinates Zn(2+).

Belongs to the vitamin-B12 independent methionine synthase family. Zn(2+) is required as a cofactor.

The catalysed reaction is 5-methyltetrahydropteroyltri-L-glutamate + L-homocysteine = tetrahydropteroyltri-L-glutamate + L-methionine. It participates in amino-acid biosynthesis; L-methionine biosynthesis via de novo pathway; L-methionine from L-homocysteine (MetE route): step 1/1. Its function is as follows. Catalyzes the transfer of a methyl group from 5-methyltetrahydrofolate to homocysteine resulting in methionine formation. This is 5-methyltetrahydropteroyltriglutamate--homocysteine methyltransferase from Campylobacter jejuni (strain RM1221).